Here is a 593-residue protein sequence, read N- to C-terminus: Brain-enriched guanylate kinase-associated protein (593 aa).

At Met-1 the chain carries N-acetylmethionine. Tyr-137 carries the post-translational modification Phosphotyrosine. Ser-200, Ser-229, Ser-246, Ser-265, Ser-346, and Ser-373 each carry phosphoserine. Arg-381 carries the post-translational modification Asymmetric dimethylarginine. A phosphoserine mark is found at Ser-455, Ser-465, Ser-475, Ser-477, Ser-500, Ser-502, Ser-506, Ser-553, and Ser-563. Residues 499–593 (LSLSPGRSAD…KAQLYGTLLN (95 aa)) form a disordered region.

As to quaternary structure, interacts with DLG4 and DLGAP1 and forms a ternary complex.

The protein resides in the cytoplasm. It localises to the membrane. May sustain the structure of the postsynaptic density (PSD). The sequence is that of Brain-enriched guanylate kinase-associated protein (BEGAIN) from Homo sapiens (Human).